A 1205-amino-acid polypeptide reads, in one-letter code: Nitric oxide synthase 3 (1205 aa).

The tract at residues 1-73 is disordered; that stretch reads MGNLKSVGQE…PPDGPKFPRV (73 aa). G2 is lipidated: N-myristoyl glycine. S-palmitoyl cysteine attachment occurs at residues C15 and C26. A compositionally biased stretch (gly residues) spans 15–27; that stretch reads CGLGLGLGLGLCG. The span at 44 to 54 shows a compositional bias: pro residues; sequence LAPPPSPPPAP. Zn(2+) contacts are provided by C96 and C101. Residues 100–488 are interaction with NOSIP; that stretch reads RCLGSLVFPR…TDPWKGSASK (389 aa). A (6R)-L-erythro-5,6,7,8-tetrahydrobiopterin-binding site is contributed by S104. Residue S116 is modified to Phosphoserine; by CDK5. Residue C186 coordinates heme b. 5 residues coordinate L-arginine: Q249, W358, Y359, E363, and N368. (6R)-L-erythro-5,6,7,8-tetrahydrobiopterin-binding residues include A448, W449, and F462. Y477 is a heme b binding site. The interval 492-512 is calmodulin-binding; it reads VTRKKTFKEVANAVKISASLM. At T497 the chain carries Phosphothreonine; by AMPK. The Flavodoxin-like domain maps to 522-705; that stretch reads ATILYGSETG…AFGGWAQAAF (184 aa). The FMN site is built by S528, E529, T530, R532, S574, and T575. A phosphoserine mark is found at S617, S635, and S640. S656, C663, E689, and Q693 together coordinate FMN. The region spanning 758-1004 is the FAD-binding FR-type domain; that stretch reads RKMVQATVLA…IRGAPSFRLP (247 aa). R778 is a binding site for NADP(+). H800 serves as a coordination point for FAD. The interval 819-850 is disordered; that stretch reads VEDPPPPGEPVAVEQLEKGSPGGPPPSWVRDP. S838 is modified (phosphoserine). FAD contacts are provided by R940, Y942, S943, T958, A960, Y964, V977, C978, and S979. Residues T1018, R1051, S1080, R1081, K1087, Y1089, and Q1091 each contribute to the NADP(+) site. T1177 carries the phosphothreonine modification. Residue S1179 is modified to Phosphoserine; by AMPK. S1181 carries the post-translational modification Phosphoserine.

It belongs to the NOS family. Homodimer. Interacts with NOSIP and NOSTRIN. Interacts with HSP90AB1. Forms a complex with ASL, ASS1 and SLC7A1; the complex regulates cell-autonomous L-arginine synthesis and citrulline recycling while channeling extracellular L-arginine to nitric oxide synthesis pathway. Heme b serves as cofactor. Requires FAD as cofactor. It depends on FMN as a cofactor. The cofactor is (6R)-L-erythro-5,6,7,8-tetrahydrobiopterin. In terms of processing, phosphorylation by AMPK at Ser-1179 in the presence of Ca(2+)-calmodulin (CaM) activates activity. In absence of Ca(2+)-calmodulin, AMPK also phosphorylates Thr-497, resulting in inhibition of activity. Phosphorylation of Ser-116 by CDK5 reduces activity.

It is found in the membrane. The protein resides in the caveola. The protein localises to the cytoplasm. It localises to the cytoskeleton. Its subcellular location is the golgi apparatus. It is found in the cell membrane. The catalysed reaction is 2 L-arginine + 3 NADPH + 4 O2 + H(+) = 2 L-citrulline + 2 nitric oxide + 3 NADP(+) + 4 H2O. Stimulated by calcium/calmodulin. Inhibited by NOSIP and NOSTRIN. Its function is as follows. Produces nitric oxide (NO) which is implicated in vascular smooth muscle relaxation through a cGMP-mediated signal transduction pathway. NO mediates vascular endothelial growth factor (VEGF)-induced angiogenesis in coronary vessels and promotes blood clotting through the activation of platelets. The chain is Nitric oxide synthase 3 (NOS3) from Canis lupus familiaris (Dog).